Here is a 157-residue protein sequence, read N- to C-terminus: Globin (157 aa).

N-acetylglycine is present on glycine 1. The Globin domain occupies 8-155 (SLSADQKAAI…MANIIDAEQK (148 aa)). Histidine 70 and histidine 102 together coordinate heme b.

This sequence belongs to the globin family. As to quaternary structure, monomer.

The sequence is that of Globin from Nerita albicilla (Ox-palate nerite).